The sequence spans 126 residues: Small ribosomal subunit protein uS13c (126 aa).

A disordered region spans residues 95–126; that stretch reads GLPLRGQNTRTNARTKRGIKKTMAGKKKAPRK. Positions 107-126 are enriched in basic residues; sequence ARTKRGIKKTMAGKKKAPRK.

It belongs to the universal ribosomal protein uS13 family. Part of the 30S ribosomal subunit.

Its subcellular location is the plastid. The protein localises to the chloroplast. Functionally, located at the top of the head of the 30S subunit, it contacts several helices of the 16S rRNA. This chain is Small ribosomal subunit protein uS13c, found in Gracilaria tenuistipitata var. liui (Red alga).